We begin with the raw amino-acid sequence, 617 residues long: MPPYRSRTTTHGRNMAGARGLWRATGMKDEDFGKPIIAVANSFTQFVPGHVHLKDLGQLVAREIEAAGGVAKEFNTIAVDDGIAMGHGGMLYSLPSRDLIADSVEYMVNAHCADAIVCISNCDKITPGMLMAAMRLNIPVVFVSGGPMEAGKVTVKGKIRALDLVDAMVVAADDSYSDEEVEAIEKAACPTCGSCSGMFTANSMNCLTEALGLSLPGNGSVLATHADREALFKEAGRVVVDLCQRWYEQEDATALPRGIATRAAFENAMSLDIAMGGSTNTVLHLLAAAHEGGIDFSMADIDRLSRHVPCLSKVAPAKSDVHMEDVHRAGGVMAILGELERGGLIDASQPTVHAPTMGEALARWDIGRTNSQIAHEFFKAAPGGKPTQVAFSQAARWEELDLDRENGVIRSVEHPFSKDGGLAVLFGNLAPEGCIVKTAGVDESILTFRGTARVFESQDAAVSGILGGQVKAGEVVVIRYEGPKGGPGMQEMLYPTTYLKSKGLGAACALVTDGRFSGGTSGLSIGHVSPEAGEGGLIALVETGDPILIDIPTRGITLEVSDAVLAARREAQLARGKDAWTPLNRKRDLTPALRAYAAMTTNAARGAVRDVSQIERG.

Aspartate 81 is a Mg(2+) binding site. Cysteine 122 lines the [2Fe-2S] cluster pocket. Residues aspartate 123 and lysine 124 each contribute to the Mg(2+) site. Position 124 is an N6-carboxylysine (lysine 124). Cysteine 195 is a binding site for [2Fe-2S] cluster. Glutamate 491 is a binding site for Mg(2+). Serine 517 serves as the catalytic Proton acceptor.

It belongs to the IlvD/Edd family. As to quaternary structure, homodimer. Requires [2Fe-2S] cluster as cofactor. Mg(2+) is required as a cofactor.

The catalysed reaction is (2R)-2,3-dihydroxy-3-methylbutanoate = 3-methyl-2-oxobutanoate + H2O. It carries out the reaction (2R,3R)-2,3-dihydroxy-3-methylpentanoate = (S)-3-methyl-2-oxopentanoate + H2O. It functions in the pathway amino-acid biosynthesis; L-isoleucine biosynthesis; L-isoleucine from 2-oxobutanoate: step 3/4. Its pathway is amino-acid biosynthesis; L-valine biosynthesis; L-valine from pyruvate: step 3/4. Functionally, functions in the biosynthesis of branched-chain amino acids. Catalyzes the dehydration of (2R,3R)-2,3-dihydroxy-3-methylpentanoate (2,3-dihydroxy-3-methylvalerate) into 2-oxo-3-methylpentanoate (2-oxo-3-methylvalerate) and of (2R)-2,3-dihydroxy-3-methylbutanoate (2,3-dihydroxyisovalerate) into 2-oxo-3-methylbutanoate (2-oxoisovalerate), the penultimate precursor to L-isoleucine and L-valine, respectively. The chain is Dihydroxy-acid dehydratase from Caulobacter vibrioides (strain ATCC 19089 / CIP 103742 / CB 15) (Caulobacter crescentus).